Reading from the N-terminus, the 84-residue chain is Subtilisin-chymotrypsin inhibitor-2A (84 aa).

A disordered region spans residues 1-23 (MSSVEKKPEGVNTGAGDRHNLKT).

The protein belongs to the protease inhibitor I13 (potato type I serine protease inhibitor) family.

Its function is as follows. Inhibits both subtilisin and chymotrypsin. The polypeptide is Subtilisin-chymotrypsin inhibitor-2A (Hordeum vulgare (Barley)).